The following is a 295-amino-acid chain: Acetaldehyde dehydrogenase (295 aa).

11–14 provides a ligand contact to NAD(+); sequence SGNI. Cys-127 (acyl-thioester intermediate) is an active-site residue. Residues 158–166 and Asn-269 contribute to the NAD(+) site; that span reads SAGPGTRSN.

This sequence belongs to the acetaldehyde dehydrogenase family.

The catalysed reaction is acetaldehyde + NAD(+) + CoA = acetyl-CoA + NADH + H(+). This chain is Acetaldehyde dehydrogenase, found in Brevibacillus brevis (strain 47 / JCM 6285 / NBRC 100599).